A 3432-amino-acid chain; its full sequence is Genome polyprotein (3432 aa).

The segment at 2–15 (TKKPGGPGKNRAIN) is interaction with host EXOC1. At 2-109 (TKKPGGPGKN…KKQNKRGGNE (108 aa)) the chain is on the cytoplasmic side. The interval 37-72 (LLDGRGPVRFVLALITFFKFTALAPTKALLGRWRAV) is hydrophobic; homodimerization of capsid protein C. Positions 106–127 (GGNESSIMWLASLAIVIACAGA) are cleaved as a propeptide — ER anchor for the capsid protein C, removed in mature form by serine protease NS3. The chain crosses the membrane as a helical span at residues 110 to 130 (SSIMWLASLAIVIACAGAMKL). Residues 131–253 (SNFQGKLLMT…ATRYLMKTEN (123 aa)) are Extracellular-facing. N-linked (GlcNAc...) asparagine; by host glycosylation is present at Asn-142. Residues 254 to 274 (WIIRNPGYAFLAAALGWMLGS) form a helical membrane-spanning segment. Residues 275 to 279 (NSGQR) are Cytoplasmic-facing. Residues 280 to 294 (VVFTILLLLVAPAYS) form a helical membrane-spanning segment. The Extracellular segment spans residues 295-746 (FNCLGMGNRD…QVFGGAFRTL (452 aa)). Intrachain disulfides connect Cys-297-Cys-324, Cys-354-Cys-410, Cys-354-Cys-415, Cys-368-Cys-399, Cys-386-Cys-410, and Cys-386-Cys-415. The fusion peptide stretch occupies residues 392–405 (DRGWGNGCGLFGKG). N-linked (GlcNAc...) asparagine; by host glycosylation occurs at Asn-448. Cystine bridges form between Cys-484–Cys-581 and Cys-598–Cys-629. The chain crosses the membrane as a helical span at residues 747–767 (FGGMSWITQGLMGALLLWMGV). Residues 768-773 (NARDRS) are Cytoplasmic-facing. Residues 774-794 (IALAFLATGGVLVFLATNVHA) form a helical membrane-spanning segment. At 795 to 1219 (DTGCAIDITR…AFAEANSGGD (425 aa)) the chain is on the extracellular side. Intrachain disulfides connect Cys-798-Cys-809, Cys-849-Cys-937, Cys-973-Cys-1017, Cys-1074-Cys-1123, Cys-1085-Cys-1106, and Cys-1107-Cys-1110. 2 N-linked (GlcNAc...) asparagine; by host glycosylation sites follow: Asn-924 and Asn-1001. The helical transmembrane segment at 1220-1240 (VLHLALIAVFKIQPAFLVMNM) threads the bilayer. Topologically, residues 1241–1250 (LSARWTNQEN) are cytoplasmic. A helical transmembrane segment spans residues 1251-1271 (MVLVLGAAFFQLASVDLQIGV). Position 1272 (His-1272) is a topological domain, lumenal. Residues 1273 to 1293 (GILNAAAIAWMIVRAITFPTT) form a helical membrane-spanning segment. The Cytoplasmic segment spans residues 1294-1309 (STVAMPVLALLTPGMR). Residues 1310–1330 (ALYLDTYRIILLVIGICSLLQ) traverse the membrane as a helical segment. At 1331–1341 (ERRKTMAKKKG) the chain is on the lumenal side. Residues 1342–1362 (AVLLGLALTSTGWFSPTTIAA) form a helical membrane-spanning segment. Topologically, residues 1363 to 1374 (GLMVCNPNKKRG) are cytoplasmic. Residues 1375–1395 (WPATEFLSAVGLMFAIVGGLA) traverse the membrane as a helical segment. The Lumenal portion of the chain corresponds to 1396–1398 (ELD). A helical transmembrane segment spans residues 1399–1419 (IESMSIPFMLAGLMAVSYVIS). At 1420-1476 (GKATDMWLDRAADISWEMEAAITGSSRRLDVKLDDDGDFHLIDDPGVPWKVWLLRMS) the chain is on the cytoplasmic side. Residues 1427-1466 (LDRAADISWEMEAAITGSSRRLDVKLDDDGDFHLIDDPGV) are interacts with and activates NS3 protease. Positions 1477-1497 (CIGLAALTPWAIVPAAFGYWL) form an intramembrane region, helical. Over 1498–2173 (TLKTTKRGGV…RMALEELPDA (676 aa)) the chain is Cytoplasmic. The 178-residue stretch at 1505 to 1682 (GGVFWDTPSP…DRQEEPVPDA (178 aa)) folds into the Peptidase S7 domain. Active-site charge relay system; for serine protease NS3 activity residues include His-1555, Asp-1579, and Ser-1639. Residues 1685 to 1841 (PSMLKKRQMT…DSNAPIHDLQ (157 aa)) enclose the Helicase ATP-binding domain. The important for RNA-binding stretch occupies residues 1689–1692 (KKRQ). 1698–1705 (LHPGSGKT) contacts ATP. The DEAH box signature appears at 1789 to 1792 (DEAH). Positions 1852 to 2017 (GYEWITEYAG…GLVAQLYGPE (166 aa)) constitute a Helicase C-terminal domain. N6-acetyllysine; by host is present on Lys-1893. Residues 1950–1969 (NPSPITSASAAQRRGRVGRN) are disordered. The tract at residues 2168–2172 (EELPD) is regulates the ATPase activity of NS3 helicase. Residues 2174–2194 (LETITLIVAITVMTGGFFLLM) traverse the membrane as a helical segment. The Lumenal segment spans residues 2195–2199 (MQRKG). The segment at residues 2200–2220 (IGKMGLGALVLTLATFFLWAA) is an intramembrane region (helical). A topological domain (lumenal) is located at residue Glu-2221. Residues 2222 to 2242 (VPGTKIAGTLLVALLLMVVLI) traverse the membrane as a helical segment. At 2243–2257 (PEPEKQRSQTDNQLA) the chain is on the cytoplasmic side. Residues 2258 to 2278 (VFLICVLTVVGVVAANEYGML) form a helical membrane-spanning segment. Residues 2279-2311 (EKTKADLKSMFGGRTQAPGLTGLPSMALDLRPA) lie on the Lumenal side of the membrane. Positions 2312 to 2332 (TAWALYGGSTVVLTPLLKHLI) form an intramembrane region, helical. Residues 2333-2368 (TSEYVTTSLASISSQAGSLFVLPRGVPFTDLDLTVG) lie on the Lumenal side of the membrane. A helical membrane pass occupies residues 2369 to 2389 (LVFLGCWGQITLTTFLTAMVL). The Cytoplasmic segment spans residues 2390 to 2444 (VTLHYGYMLPGWQAEALRAAQRRTAAGIMKNAVVDGMVATDVPELERTTPLMQKK). The chain crosses the membrane as a helical span at residues 2445–2465 (VGQVLLIGVSVAAFLVNPNVT). Residues 2466–2469 (TVRE) lie on the Lumenal side of the membrane. Residues 2470-2490 (AGVLVTAATLTLWDNGASAVW) form a helical membrane-spanning segment. At 2491–3432 (NSTTATGLCH…DVLIQEDRVI (942 aa)) the chain is on the cytoplasmic side. One can recognise an mRNA cap 0-1 NS5-type MT domain in the interval 2528 to 2793 (GRPGGRTLGE…DVNLGSGTRA (266 aa)). Ser-2583 lines the S-adenosyl-L-methionine pocket. Ser-2583 carries the post-translational modification Phosphoserine. Lys-2588 functions as the For 2'-O-MTase activity in the catalytic mechanism. Residues Gly-2613, Trp-2614, Thr-2631, Lys-2632, Asp-2658, and Val-2659 each coordinate S-adenosyl-L-methionine. Asp-2673 (for 2'-O-MTase activity) is an active-site residue. Ile-2674 serves as a coordination point for S-adenosyl-L-methionine. Catalysis depends on for 2'-O-MTase activity residues Lys-2709 and Glu-2745. Tyr-2747 provides a ligand contact to S-adenosyl-L-methionine. The Zn(2+) site is built by Glu-2967, His-2971, Cys-2976, and Cys-2979. Residues 3057–3209 (GKMYADDTAG…KPLDDRFATA (153 aa)) enclose the RdRp catalytic domain. Positions 3244, 3260, and 3379 each coordinate Zn(2+).

The protein in the N-terminal section; belongs to the class I-like SAM-binding methyltransferase superfamily. mRNA cap 0-1 NS5-type methyltransferase family. Homodimer. Interacts (via N-terminus) with host EXOC1 (via C-terminus); this interaction results in EXOC1 degradation through the proteasome degradation pathway. In terms of assembly, forms heterodimers with envelope protein E in the endoplasmic reticulum and Golgi. As to quaternary structure, homodimer; in the endoplasmic reticulum and Golgi. Interacts with protein prM. Interacts with non-structural protein 1. Interacts with host HSPA5. Homodimer; Homohexamer when secreted. Interacts with envelope protein E. NS1 interacts with NS4B. Interacts with host complement protein CFH; this interaction leads to the degradation of C3. In terms of assembly, interacts (via N-terminus) with serine protease NS3. As to quaternary structure, forms a heterodimer with serine protease NS3. May form homooligomers. Forms a heterodimer with NS2B. Interacts with non-structural protein 2A (via N-terminus). Interacts with NS4B. Interacts with unphosphorylated RNA-directed RNA polymerase NS5; this interaction stimulates RNA-directed RNA polymerase NS5 guanylyltransferase activity. Interacts with host ILF2. In terms of assembly, interacts with serine protease NS3. As to quaternary structure, homodimer. Interacts with host STAT2; this interaction inhibits the phosphorylation of the latter, and, when all viral proteins are present (polyprotein), targets STAT2 for degradation. Interacts with serine protease NS3. Requires Mn(2+) as cofactor. Mg(2+) is required as a cofactor. In terms of processing, specific enzymatic cleavages in vivo yield mature proteins. Cleavages in the lumen of endoplasmic reticulum are performed by host signal peptidase, whereas cleavages in the cytoplasmic side are performed by serine protease NS3. Signal cleavage at the 2K-4B site requires a prior NS3 protease-mediated cleavage at the 4A-2K site. Cleaved in post-Golgi vesicles by a host furin, releasing the mature small envelope protein M, and peptide pr. This cleavage is incomplete as up to 30% of viral particles still carry uncleaved prM. Post-translationally, N-glycosylated. In terms of processing, N-glycosylated. The excreted form is glycosylated and this is required for efficient secretion of the protein from infected cells. Acetylated by host KAT5. Acetylation modulates NS3 RNA-binding and unwinding activities and plays an important positive role for viral replication. Post-translationally, phosphorylated on serines residues. This phosphorylation may trigger NS5 nuclear localization.

The protein localises to the host endoplasmic reticulum membrane. Its subcellular location is the virion. It localises to the host nucleus. The protein resides in the host cytoplasm. It is found in the host perinuclear region. The protein localises to the secreted. Its subcellular location is the virion membrane. It localises to the host cell surface. It carries out the reaction Selective hydrolysis of -Xaa-Xaa-|-Yaa- bonds in which each of the Xaa can be either Arg or Lys and Yaa can be either Ser or Ala.. It catalyses the reaction a ribonucleoside 5'-triphosphate + H2O = a ribonucleoside 5'-diphosphate + phosphate + H(+). The catalysed reaction is RNA(n) + a ribonucleoside 5'-triphosphate = RNA(n+1) + diphosphate. The enzyme catalyses ATP + H2O = ADP + phosphate + H(+). It carries out the reaction a 5'-end (5'-triphosphoguanosine)-ribonucleoside in mRNA + S-adenosyl-L-methionine = a 5'-end (N(7)-methyl 5'-triphosphoguanosine)-ribonucleoside in mRNA + S-adenosyl-L-homocysteine. It catalyses the reaction a 5'-end (N(7)-methyl 5'-triphosphoguanosine)-ribonucleoside in mRNA + S-adenosyl-L-methionine = a 5'-end (N(7)-methyl 5'-triphosphoguanosine)-(2'-O-methyl-ribonucleoside) in mRNA + S-adenosyl-L-homocysteine + H(+). Plays a role in virus budding by binding to the cell membrane and gathering the viral RNA into a nucleocapsid that forms the core of a mature virus particle. During virus entry, may induce genome penetration into the host cytoplasm after hemifusion induced by the surface proteins. Can migrate to the cell nucleus where it modulates host functions. Overcomes the anti-viral effects of host EXOC1 by sequestering and degrading the latter through the proteasome degradation pathway. Its function is as follows. Inhibits RNA silencing by interfering with host Dicer. In terms of biological role, prevents premature fusion activity of envelope proteins in trans-Golgi by binding to envelope protein E at pH6.0. After virion release in extracellular space, gets dissociated from E dimers. Functionally, acts as a chaperone for envelope protein E during intracellular virion assembly by masking and inactivating envelope protein E fusion peptide. prM is the only viral peptide matured by host furin in the trans-Golgi network probably to avoid catastrophic activation of the viral fusion activity in acidic Golgi compartment prior to virion release. prM-E cleavage is inefficient, and many virions are only partially matured. These uncleaved prM would play a role in immune evasion. May play a role in virus budding. Exerts cytotoxic effects by activating a mitochondrial apoptotic pathway through M ectodomain. May display a viroporin activity. Its function is as follows. Binds to host cell surface receptor and mediates fusion between viral and cellular membranes. Efficient virus attachment to cell is, at least in part, mediated by host HSPA5. Envelope protein is synthesized in the endoplasmic reticulum in the form of heterodimer with protein prM. They play a role in virion budding in the ER, and the newly formed immature particle is covered with 60 spikes composed of heterodimer between precursor prM and envelope protein E. The virion is transported to the Golgi apparatus where the low pH causes dissociation of PrM-E heterodimers and formation of E homodimers. prM-E cleavage is inefficient, and many virions are only partially matured. These uncleaved prM would play a role in immune evasion. In terms of biological role, involved in immune evasion, pathogenesis and viral replication. Once cleaved off the polyprotein, is targeted to three destinations: the viral replication cycle, the plasma membrane and the extracellular compartment. Essential for viral replication. Required for formation of the replication complex and recruitment of other non-structural proteins to the ER-derived membrane structures. Excreted as a hexameric lipoparticle that plays a role against host immune response. Antagonizing the complement function. Binds to the host macrophages and dendritic cells. Inhibits signal transduction originating from Toll-like receptor 3 (TLR3). Functionally, component of the viral RNA replication complex that functions in virion assembly and antagonizes the host alpha/beta interferon antiviral response. Required cofactor for the serine protease function of NS3. May have membrane-destabilizing activity and form viroporins. Its function is as follows. Displays three enzymatic activities: serine protease, NTPase and RNA helicase. NS3 serine protease, in association with NS2B, performs its autocleavage and cleaves the polyprotein at dibasic sites in the cytoplasm: C-prM, NS2A-NS2B, NS2B-NS3, NS3-NS4A, NS4A-2K and NS4B-NS5. NS3 RNA helicase binds RNA and unwinds dsRNA in the 3' to 5' direction. In terms of biological role, regulates the ATPase activity of the NS3 helicase activity. NS4A allows NS3 helicase to conserve energy during unwinding. Functionally, functions as a signal peptide for NS4B and is required for the interferon antagonism activity of the latter. Induces the formation of ER-derived membrane vesicles where the viral replication takes place. Inhibits interferon (IFN)-induced host STAT1 phosphorylation and nuclear translocation, thereby preventing the establishment of cellular antiviral state by blocking the IFN-alpha/beta pathway. Inhibits STAT2 translocation in the nucleus after IFN-alpha treatment. Its function is as follows. Replicates the viral (+) and (-) RNA genome. Performs the capping of genomes in the cytoplasm. NS5 methylates viral RNA cap at guanine N-7 and ribose 2'-O positions. Besides its role in RNA genome replication, also prevents the establishment of cellular antiviral state by blocking the interferon-alpha/beta (IFN-alpha/beta) signaling pathway. Inhibits host TYK2 and STAT2 phosphorylation, thereby preventing activation of JAK-STAT signaling pathway. The protein is Genome polyprotein of Japanese encephalitis virus (strain M28) (JEV).